We begin with the raw amino-acid sequence, 615 residues long: MSESQRHEAREDGFTTPHESGLSSEDAAELEELRREAAALREQLENAVGPQSGLRSARDVHQLEARIDSLAARNAKLMDTLKEARQQLLALREEVDRLGQPPSGYGVLLASHEDDTVDVFTSGRKMRLTCSPNIDVKALKQGQTVRLNEALTVVEAGTFEAVGEISTLREILSDGHRALVVGHADEERIVWLAEPLVSVEHLPDNEVAGPELDDDRPRRLRPGDSLLVDTKAGYAFERIPKAEVEDLVLEEVPDVSYSDIGGLTRQIEQIRDAVELPFLHKDLYREYSLRPPKGVLLYGPPGCGKTLIAKAVANSLAKKMAEVRGDDAREAKSYFLNIKGPELLNKFVGETERHIRLIFQRAREKASEGTPVIVFFDEMDSIFRTRGTGVSSDVETTVVPQLLSEIDGVEGLENVIVIGASNREDMIDPAILRPGRLDVKIKIERPDAEAAQDIFSKYLTEELPVNEDDLAEFGGDRSLTIKAMIEKVVDRMYAEIDDNRFLEVTYANGDKEVMYFKDFNSGAMIQNVVDRAKKYAIKSVLETGQKGLRIQHLLDSIVDEFAENEDLPNTTNPDDWARISGKKGERIVYIRTLVTGKSSSANRAIDTESNLGQYL.

The segment covering 1 to 13 has biased composition (basic and acidic residues); it reads MSESQRHEAREDG. The segment at 1-32 is disordered; sequence MSESQRHEAREDGFTTPHESGLSSEDAAELEE. Residues 22 to 100 adopt a coiled-coil conformation; that stretch reads LSSEDAAELE…LREEVDRLGQ (79 aa). 302–307 serves as a coordination point for ATP; that stretch reads GCGKTL. The docks into pockets in the proteasome alpha-ring stretch occupies residues 614-615; that stretch reads YL.

The protein belongs to the AAA ATPase family. In terms of assembly, homohexamer. Assembles into a hexameric ring structure that caps the 20S proteasome core. Strongly interacts with the prokaryotic ubiquitin-like protein Pup through a hydrophobic interface; the interacting region of ARC lies in its N-terminal coiled-coil domain. There is one Pup binding site per ARC hexamer ring. Upon ATP-binding, the C-terminus of ARC interacts with the alpha-rings of the proteasome core, possibly by binding to the intersubunit pockets.

Its pathway is protein degradation; proteasomal Pup-dependent pathway. ATPase which is responsible for recognizing, binding, unfolding and translocation of pupylated proteins into the bacterial 20S proteasome core particle. May be essential for opening the gate of the 20S proteasome via an interaction with its C-terminus, thereby allowing substrate entry and access to the site of proteolysis. Thus, the C-termini of the proteasomal ATPase may function like a 'key in a lock' to induce gate opening and therefore regulate proteolysis. This chain is Proteasome-associated ATPase, found in Mycobacterium sp. (strain JLS).